A 255-amino-acid polypeptide reads, in one-letter code: Acetylglutamate kinase (255 aa).

Substrate-binding positions include Gly40–Gly41, Arg62, and Asn153.

This sequence belongs to the acetylglutamate kinase family. ArgB subfamily.

It localises to the cytoplasm. It carries out the reaction N-acetyl-L-glutamate + ATP = N-acetyl-L-glutamyl 5-phosphate + ADP. It participates in amino-acid biosynthesis; L-arginine biosynthesis; N(2)-acetyl-L-ornithine from L-glutamate: step 2/4. Functionally, catalyzes the ATP-dependent phosphorylation of N-acetyl-L-glutamate. This chain is Acetylglutamate kinase, found in Bacillus cereus (strain ZK / E33L).